The sequence spans 442 residues: UDP-N-acetylmuramate--L-alanine ligase (442 aa).

An ATP-binding site is contributed by 109 to 115 (GAHGKTS).

This sequence belongs to the MurCDEF family.

It is found in the cytoplasm. It catalyses the reaction UDP-N-acetyl-alpha-D-muramate + L-alanine + ATP = UDP-N-acetyl-alpha-D-muramoyl-L-alanine + ADP + phosphate + H(+). Its pathway is cell wall biogenesis; peptidoglycan biosynthesis. In terms of biological role, cell wall formation. The chain is UDP-N-acetylmuramate--L-alanine ligase from Streptococcus pyogenes serotype M3 (strain SSI-1).